Reading from the N-terminus, the 343-residue chain is Multidrug resistance protein MdtN (343 aa).

Residues 1-12 (MESTPKKAPRSK) are Cytoplasmic-facing. The chain crosses the membrane as a helical; Signal-anchor for type II membrane protein span at residues 13 to 33 (FPALLVVALALVALVFVIWRV). The Periplasmic portion of the chain corresponds to 34-343 (DSAPSTNDAY…ASAVANLEPQ (310 aa)).

The protein belongs to the membrane fusion protein (MFP) (TC 8.A.1) family. As to quaternary structure, could be part of a tripartite efflux system composed of MdtN, MdtO and MdtP.

It is found in the cell inner membrane. In terms of biological role, could be involved in resistance to puromycin, acriflavine and tetraphenylarsonium chloride. This is Multidrug resistance protein MdtN (mdtN) from Escherichia coli O6:H1 (strain CFT073 / ATCC 700928 / UPEC).